Consider the following 451-residue polypeptide: Probable V-type proton ATPase subunit H 1 (451 aa).

It belongs to the V-ATPase H subunit family. V-ATPase is a heteromultimeric enzyme made up of two complexes: the ATP-hydrolytic V1 complex and the proton translocation V0 complex. The V1 complex consists of three catalytic AB heterodimers that form a heterohexamer, three peripheral stalks each consisting of EG heterodimers, one central rotor including subunits D and F, and the regulatory subunits C and H. The proton translocation complex V0 consists of the proton transport subunit a, a ring of proteolipid subunits c9c'', rotary subunit d, subunits e and f, and the accessory subunits vah-19/Ac45 and vah-20/PRR.

In terms of biological role, subunit of the V1 complex of vacuolar(H+)-ATPase (V-ATPase), a multisubunit enzyme composed of a peripheral complex (V1) that hydrolyzes ATP and a membrane integral complex (V0) that translocates protons. V-ATPase is responsible for acidifying and maintaining the pH of intracellular compartments and in some cell types, is targeted to the plasma membrane, where it is responsible for acidifying the extracellular environment. Subunit H is essential for V-ATPase activity, but not for the assembly of the complex. The polypeptide is Probable V-type proton ATPase subunit H 1 (Caenorhabditis elegans).